Reading from the N-terminus, the 193-residue chain is Signal peptidase I T (193 aa).

Residues 1–25 (MTEEKNTNTEKTAKKKTNTYLEWGK) lie on the Cytoplasmic side of the membrane. The helical transmembrane segment at 26–42 (AIVIAVLLALLIRHFLF) threads the bilayer. At 43–193 (EPYLVEGSSM…FPFNEMRQTK (151 aa)) the chain is on the extracellular side. Active-site residues include Ser-51 and Lys-93.

It belongs to the peptidase S26 family.

The protein localises to the cell membrane. The enzyme catalyses Cleavage of hydrophobic, N-terminal signal or leader sequences from secreted and periplasmic proteins.. The polypeptide is Signal peptidase I T (sipT) (Bacillus subtilis (strain 168)).